The chain runs to 443 residues: uncharacterized protein (443 aa).

This is an uncharacterized protein from Mycoplasma genitalium (strain ATCC 33530 / DSM 19775 / NCTC 10195 / G37) (Mycoplasmoides genitalium).